A 717-amino-acid polypeptide reads, in one-letter code: Ubinuclein-2 (717 aa).

3 disordered regions span residues 114–136 (KDGSDGEELDGAPDDDDYDTEDS), 166–308 (LERI…SAKS), and 620–717 (ADSS…NLPS). Residues 118–136 (DGEELDGAPDDDDYDTEDS) show a composition bias toward acidic residues. Polar residues-rich tracts occupy residues 214–246 (QSASPGPSSKKISNDSKTVQDSFSPLKAQNGND) and 285–308 (SSKSVHEQSNSPPGKSRPNVSAKS). Positions 623–632 (SFERSKQQHE) are enriched in basic and acidic residues. A Nuclear localization signal motif is present at residues 634-641 (LKRTSSLS). Positions 653 to 665 (KTEPALEETHLPA) are enriched in basic and acidic residues. The segment covering 675-705 (RQTHLKSKTHKQVQVHPQSKAHKQAQVHPKA) has biased composition (basic residues). Positions 706–717 (KTQTPPDLNLPS) are enriched in polar residues.

It belongs to the ubinuclein family. Component of the HIRA complex made of UBN1, UBN2, ASF1A, CABIN1 and HIRA. Interacts with HIRA.

It localises to the nucleus. Its subcellular location is the nucleolus. In terms of biological role, may be required for replication-independent chromatin assembly. The chain is Ubinuclein-2 from Arabidopsis thaliana (Mouse-ear cress).